The following is a 465-amino-acid chain: GTPase Der (465 aa).

2 EngA-type G domains span residues 3–167 and 179–352; these read PLVA…PERS and IHIA…VSAL. GTP is bound by residues 9 to 16, 57 to 61, 119 to 122, 185 to 192, 232 to 236, and 297 to 300; these read GRPNVGKS, DTGGM, NKID, DTAGL, and NKWD. Residues 353–437 enclose the KH-like domain; the sequence is RQFSTSEVNK…PVRFLFREGD (85 aa).

The protein belongs to the TRAFAC class TrmE-Era-EngA-EngB-Septin-like GTPase superfamily. EngA (Der) GTPase family. As to quaternary structure, associates with the 50S ribosomal subunit.

Functionally, GTPase that plays an essential role in the late steps of ribosome biogenesis. The sequence is that of GTPase Der from Xylella fastidiosa (strain M12).